Reading from the N-terminus, the 596-residue chain is UvrABC system protein C (596 aa).

One can recognise a GIY-YIG domain in the interval 14–91 (QQPGCYLMKD…IKKYDPRYNV (78 aa)). A UVR domain is found at 196–231 (KDIRKNLAGEMQKASEALNFERAKEIRDTIQHIDAT).

It belongs to the UvrC family. As to quaternary structure, interacts with UvrB in an incision complex.

The protein resides in the cytoplasm. Its function is as follows. The UvrABC repair system catalyzes the recognition and processing of DNA lesions. UvrC both incises the 5' and 3' sides of the lesion. The N-terminal half is responsible for the 3' incision and the C-terminal half is responsible for the 5' incision. This is UvrABC system protein C from Oceanobacillus iheyensis (strain DSM 14371 / CIP 107618 / JCM 11309 / KCTC 3954 / HTE831).